Reading from the N-terminus, the 192-residue chain is Dynein axonemal light chain 1 (192 aa).

4 LRR repeats span residues 49–70 (NCER…NGLK), 71–92 (NLKI…EAVG), 94–115 (TLEE…HVMK), and 116–137 (KLKV…LKLA). The region spanning 150–192 (NPLEEKYSADGNWIEEATKRLPKLKKLDGNPVIKQEEETEGES) is the LRRCT domain.

The protein belongs to the dynein light chain LC1-type family. In terms of assembly, interacts with DNAH5, a outer arm dynein heavy chain. Interacts with tubulin located within the A-tubule of the outer doublets in a ATP-independent manner.

The protein resides in the cytoplasm. Its subcellular location is the cytoskeleton. It is found in the cilium axoneme. In terms of biological role, part of the multisubunit axonemal ATPase complexes that generate the force for cilia motility and govern beat frequency. Component of the outer arm dynein (ODA). May be involved in a mechanosensory feedback mechanism controlling ODA activity based on external conformational cues by tethering the outer arm dynein heavy chain (DNAH5) to the microtubule within the axoneme. This Danio rerio (Zebrafish) protein is Dynein axonemal light chain 1 (dnal1).